A 194-amino-acid polypeptide reads, in one-letter code: dCTP deaminase (194 aa).

DCTP contacts are provided by residues 110–115, D128, 136–138, Y171, K178, and Q182; these read RSSLAR and VLE. The active-site Proton donor/acceptor is E138.

Belongs to the dCTP deaminase family. Homotrimer.

It catalyses the reaction dCTP + H2O + H(+) = dUTP + NH4(+). The protein operates within pyrimidine metabolism; dUMP biosynthesis; dUMP from dCTP (dUTP route): step 1/2. In terms of biological role, catalyzes the deamination of dCTP to dUTP. The protein is dCTP deaminase of Haemophilus ducreyi (strain 35000HP / ATCC 700724).